Consider the following 133-residue polypeptide: Nickel-responsive regulator (133 aa).

Residues histidine 76, histidine 87, histidine 89, and cysteine 95 each coordinate Ni(2+).

It belongs to the transcriptional regulatory CopG/NikR family. Homotetramer. Requires Ni(2+) as cofactor.

Functionally, transcriptional repressor of the nikABCDE operon. Is active in the presence of excessive concentrations of intracellular nickel. This Salmonella choleraesuis (strain SC-B67) protein is Nickel-responsive regulator.